Here is a 170-residue protein sequence, read N- to C-terminus: E1B protein, small T-antigen (170 aa).

Residues 137–170 (PAQPPHGLDPVREEEEEEEEEENLRAGLDPQTEL) are disordered. Over residues 148-158 (REEEEEEEEEE) the composition is skewed to acidic residues.

It belongs to the adenoviridae E1B 19 kDa protein family.

It localises to the host cell membrane. It is found in the host nucleus envelope. The protein resides in the host nucleus lamina. Its function is as follows. Putative adenovirus Bcl-2 homolog that inhibits apoptosis induced by TNF or FAS pathways, as well as p53-mediated apoptosis. Without E1B 19K function, virus production is compromised because of premature death of host cell. Interacts with Bax protein in cell lysates. The sequence is that of E1B protein, small T-antigen from Homo sapiens (Human).